We begin with the raw amino-acid sequence, 673 residues long: UvrABC system protein B (673 aa).

The Helicase ATP-binding domain maps to 26 to 414; the sequence is ANFEAGLAKQ…AGEVTELVVR (389 aa). 39–46 contacts ATP; sequence GVTGSGKT. Residues 92-115 carry the Beta-hairpin motif; sequence YYDYYQPEAYVPSSDTFIEKDSSI. A Helicase C-terminal domain is found at 431-597; it reads QVDDLMSEVH…SVERPIADIM (167 aa). Basic and acidic residues-rich tracts occupy residues 600 to 609 and 618 to 628; these read ARDDAAEKKS and HVAEETPDYRA. The segment at 600-628 is disordered; that stretch reads ARDDAAEKKSGKGRSKSRHVAEETPDYRA. The UVR domain maps to 635–670; it reads AGKLKSLEQKMYQHAKDLEFEAAAQIRDQIQKLKAA.

It belongs to the UvrB family. As to quaternary structure, forms a heterotetramer with UvrA during the search for lesions. Interacts with UvrC in an incision complex.

It localises to the cytoplasm. In terms of biological role, the UvrABC repair system catalyzes the recognition and processing of DNA lesions. A damage recognition complex composed of 2 UvrA and 2 UvrB subunits scans DNA for abnormalities. Upon binding of the UvrA(2)B(2) complex to a putative damaged site, the DNA wraps around one UvrB monomer. DNA wrap is dependent on ATP binding by UvrB and probably causes local melting of the DNA helix, facilitating insertion of UvrB beta-hairpin between the DNA strands. Then UvrB probes one DNA strand for the presence of a lesion. If a lesion is found the UvrA subunits dissociate and the UvrB-DNA preincision complex is formed. This complex is subsequently bound by UvrC and the second UvrB is released. If no lesion is found, the DNA wraps around the other UvrB subunit that will check the other stand for damage. The polypeptide is UvrABC system protein B (Xanthomonas axonopodis pv. citri (strain 306)).